Here is a 189-residue protein sequence, read N- to C-terminus: Peptidyl-tRNA hydrolase (189 aa).

A tRNA-binding site is contributed by Tyr17. His22 acts as the Proton acceptor in catalysis. TRNA-binding residues include Phe65, Asn67, and Asn113.

This sequence belongs to the PTH family. In terms of assembly, monomer.

It localises to the cytoplasm. The catalysed reaction is an N-acyl-L-alpha-aminoacyl-tRNA + H2O = an N-acyl-L-amino acid + a tRNA + H(+). Functionally, hydrolyzes ribosome-free peptidyl-tRNAs (with 1 or more amino acids incorporated), which drop off the ribosome during protein synthesis, or as a result of ribosome stalling. Catalyzes the release of premature peptidyl moieties from peptidyl-tRNA molecules trapped in stalled 50S ribosomal subunits, and thus maintains levels of free tRNAs and 50S ribosomes. In Mycoplasma genitalium (strain ATCC 33530 / DSM 19775 / NCTC 10195 / G37) (Mycoplasmoides genitalium), this protein is Peptidyl-tRNA hydrolase.